The following is a 320-amino-acid chain: Bifunctional ligase/repressor BirA (320 aa).

A DNA-binding region (H-T-H motif) is located at residues 22–41 (GEQLGERLGMSRAAINKHIQ). The 189-residue stretch at 66-254 (LLDADRIHSQ…KLRAALELFE (189 aa)) folds into the BPL/LPL catalytic domain. Biotin-binding positions include 89–91 (STN), Gln112, 116–118 (RGR), and Lys183.

Belongs to the biotin--protein ligase family.

The catalysed reaction is biotin + L-lysyl-[protein] + ATP = N(6)-biotinyl-L-lysyl-[protein] + AMP + diphosphate + H(+). In terms of biological role, acts both as a biotin--[acetyl-CoA-carboxylase] ligase and a biotin-operon repressor. In the presence of ATP, BirA activates biotin to form the BirA-biotinyl-5'-adenylate (BirA-bio-5'-AMP or holoBirA) complex. HoloBirA can either transfer the biotinyl moiety to the biotin carboxyl carrier protein (BCCP) subunit of acetyl-CoA carboxylase, or bind to the biotin operator site and inhibit transcription of the operon. This is Bifunctional ligase/repressor BirA from Salmonella typhimurium (strain LT2 / SGSC1412 / ATCC 700720).